Consider the following 374-residue polypeptide: tRNA (guanine(26)-N(2))-dimethyltransferase (374 aa).

Residues 4 to 371 (IEIREGKASL…KEIDEIVNCI (368 aa)) form the Trm1 methyltransferase domain. Arg44, Arg69, Asp87, Asp113, and Ala114 together coordinate S-adenosyl-L-methionine. Zn(2+) contacts are provided by Cys244, Cys247, Cys261, and Cys264.

It belongs to the class I-like SAM-binding methyltransferase superfamily. Trm1 family.

The enzyme catalyses guanosine(26) in tRNA + 2 S-adenosyl-L-methionine = N(2)-dimethylguanosine(26) in tRNA + 2 S-adenosyl-L-homocysteine + 2 H(+). Functionally, dimethylates a single guanine residue at position 26 of a number of tRNAs using S-adenosyl-L-methionine as donor of the methyl groups. In Sulfurisphaera tokodaii (strain DSM 16993 / JCM 10545 / NBRC 100140 / 7) (Sulfolobus tokodaii), this protein is tRNA (guanine(26)-N(2))-dimethyltransferase.